We begin with the raw amino-acid sequence, 128 residues long: UPF0325 protein NT01EI_0832 (128 aa).

Belongs to the UPF0325 family.

The protein is UPF0325 protein NT01EI_0832 of Edwardsiella ictaluri (strain 93-146).